Here is a 454-residue protein sequence, read N- to C-terminus: Probable DNA primase large subunit (454 aa).

Cys-280, Cys-359, Cys-375, and Cys-415 together coordinate [4Fe-4S] cluster.

The protein belongs to the eukaryotic-type primase large subunit family. As to quaternary structure, heterodimer of a small subunit and a large subunit. [4Fe-4S] cluster serves as cofactor.

DNA primase is the polymerase that synthesizes small RNA primers for the Okazaki fragments made during discontinuous DNA replication. The sequence is that of Probable DNA primase large subunit from Arabidopsis thaliana (Mouse-ear cress).